A 314-amino-acid chain; its full sequence is Pyridoxal 5'-phosphate synthase-like subunit PDX1.2 (314 aa).

At A2 the chain carries N-acetylalanine.

It belongs to the PdxS/SNZ family. Homodimer or heterodimer with PDX1.1 or PDX1.3. No interaction with PDX2. In terms of tissue distribution, expressed in callus tissues, flowers and roots. Weakly expressed in leaves and stems.

Its subcellular location is the cytoplasm. In terms of biological role, the protein has no function in the formation of pyridoxal 5'-phosphate. This chain is Pyridoxal 5'-phosphate synthase-like subunit PDX1.2 (PDX12), found in Arabidopsis thaliana (Mouse-ear cress).